We begin with the raw amino-acid sequence, 304 residues long: N-carbamoyl-D-amino acid hydrolase (304 aa).

The region spanning 5-276 is the CN hydrolase domain; it reads MILAVGQQGP…DEVITAAVDL (272 aa). Residues Glu47, Lys127, and Cys172 contribute to the active site.

It carries out the reaction an N-carbamoyl-D-amino acid + H2O + 2 H(+) = a D-alpha-amino acid + NH4(+) + CO2. In terms of biological role, the enzyme catalyzes the hydrolysis of N-carbamoyl-D-amino acids to the corresponding which are useful intermediates in the preparation of beta-lactam antibiotics. Industrial production of beta-lactam antibiotics is now being developed using this enzyme. The sequence is that of N-carbamoyl-D-amino acid hydrolase from Agrobacterium sp. (strain KNK712).